Reading from the N-terminus, the 567-residue chain is Formate--tetrahydrofolate ligase (567 aa).

68–75 serves as a coordination point for ATP; that stretch reads TPLGEGKT.

Belongs to the formate--tetrahydrofolate ligase family.

It catalyses the reaction (6S)-5,6,7,8-tetrahydrofolate + formate + ATP = (6R)-10-formyltetrahydrofolate + ADP + phosphate. Its pathway is one-carbon metabolism; tetrahydrofolate interconversion. The protein is Formate--tetrahydrofolate ligase of Desulforamulus reducens (strain ATCC BAA-1160 / DSM 100696 / MI-1) (Desulfotomaculum reducens).